We begin with the raw amino-acid sequence, 1290 residues long: Sorbin and SH3 domain-containing protein 1 (1290 aa).

3 disordered regions span residues 1–211 (MSSE…LSDV), 238–271 (HKLN…SKSE), and 286–313 (TLPL…KKVD). Positions 45–61 (SSSYRGTPSSSPVSPQE) are enriched in low complexity. The residue at position 51 (Thr51) is a Phosphothreonine. 3 positions are modified to phosphoserine: Ser55, Ser58, and Ser62. Over residues 62–71 (SPKHESKSGL) the composition is skewed to basic and acidic residues. 2 stretches are compositionally biased toward polar residues: residues 83 to 95 (LSSS…NAQP) and 123 to 153 (EVSS…TIVN). Residues 161–173 (HNRDPASERRAGE) are compositionally biased toward basic and acidic residues. 2 positions are modified to phosphoserine: Asp164 and Asp175. Thr179 is subject to Phosphothreonine. 8 positions are modified to phosphoserine: Ser185, Ala194, Ser204, Ser209, Ser254, Ser261, Ser270, and Pro288. Positions 189–199 (ASERRAKDASR) are enriched in basic and acidic residues. Positions 202-247 (VRSAQDLSDVSTDEVGIPLRNTERSKDWYKTMFKQIHKLNRDDDSD) constitute a SoHo domain. The span at 240–260 (LNRDDDSDVHSPRYSFSDDTK) shows a compositional bias: basic and acidic residues. Positions 299 to 313 (SPERNDWEPLDKKVD) are enriched in basic and acidic residues. Tyr325 bears the Phosphotyrosine; by ABL1 mark. Phosphoserine occurs at positions 345, 346, 357, 376, and 407. The disordered stretch occupies residues 389–416 (VETVNKSPSANSPQSSAVSPTPDITSEP). Over residues 392–412 (VNKSPSANSPQSSAVSPTPDI) the composition is skewed to polar residues. Tyr421 bears the Phosphotyrosine; by ABL1 mark. Phosphoserine is present on residues Ser432 and Ser470. Disordered stretches follow at residues 463 to 482 (LSGL…RKGG), 588 to 607 (YDSK…SSRR), 697 to 739 (SLDF…EMDG), 783 to 803 (VSND…PKHR), 822 to 841 (RKHE…SRGD), and 862 to 972 (PLQQ…SPRH). Phosphothreonine is present on Thr475. Polar residues-rich tracts occupy residues 595-606 (TMSLQEYGTSSR) and 704-722 (LSKS…SARS). Ser969 carries the phosphoserine modification. SH3 domains follow at residues 1049–1108 (LEMR…LLPP) and 1123–1184 (LEYG…VLKR). Residue Thr1189 is modified to Phosphothreonine. A phosphotyrosine mark is found at Tyr1193 and Tyr1198. Low complexity predominate over residues 1198-1210 (YSSSPSRSATVSP). Positions 1198–1227 (YSSSPSRSATVSPQQPQAQQRRVTPDRSQP) are disordered. Phosphoserine occurs at positions 1201 and 1209. Positions 1211-1227 (QQPQAQQRRVTPDRSQP) are enriched in polar residues. Positions 1229-1290 (LDLCSYQALY…PGNYVKPLYL (62 aa)) constitute an SH3 3 domain. A Phosphotyrosine; by ABL1 modification is found at Tyr1238.

As to quaternary structure, interacts (via SH3 domain 2) with PXN. Interacts with the long isoform of AFDN and with VCL. AFDN and VCL bind to SORBS1 in a competitive manner and do not form a ternary complex. Interacts with ABL1, CBL, CBLB and INPPL1/SHIP2 through the third SH3 domain. Interaction with ABL1 occurs only after insulin stimulation while this has no effect on the interaction with INPPL1. Interacts with the insulin receptor but dissociates from it following insulin stimulation. Also interacts with SCA7, PTK2/FAK1 and flotillin. Interacts (via third SH3 domain) with the Ten-1 ICD form of TENM1; the interaction induces the translocation of SORBS1 to the nucleus. Interacts with INSM1. In terms of processing, O-glycosylated. In terms of tissue distribution, expressed in all tissues tested: heart, brain, spleen, lung, liver, muscle, kidney and testis. Expressed in 3T3-L1 adipocytes but not in 3T3-L1 fibroblasts.

The protein localises to the cell junction. The protein resides in the adherens junction. Its subcellular location is the cell membrane. It localises to the cytoplasm. It is found in the cytoskeleton. The protein localises to the focal adhesion. The protein resides in the nucleus. Its subcellular location is the nucleus matrix. Functionally, plays a role in tyrosine phosphorylation of CBL by linking CBL to the insulin receptor. Required for insulin-stimulated glucose transport. Involved in formation of actin stress fibers and focal adhesions. The protein is Sorbin and SH3 domain-containing protein 1 of Mus musculus (Mouse).